Here is a 242-residue protein sequence, read N- to C-terminus: Phosphatidylethanolamine-binding protein 4 (242 aa).

The first 26 residues, 1 to 26 (MTMKLVAAALCLSLLAAGLWVGLSLT), serve as a signal peptide directing secretion. A disordered region spans residues 31 to 50 (EEGKPGGEKPGGGKPGGSGR). Over residues 38-50 (EKPGGGKPGGSGR) the composition is skewed to gly residues. N-linked (GlcNAc...) asparagine glycans are attached at residues Asn77 and Asn139. Residues 210-242 (DPDTSTQFMTQFDEELSSEFGRINDDQEQFNQK) are important for secretion.

The protein belongs to the phosphatidylethanolamine-binding protein family.

The protein localises to the secreted. In terms of biological role, promotes AKT phosphorylation, suggesting a possible role in the PI3K-AKT signaling pathway. The chain is Phosphatidylethanolamine-binding protein 4 (Pebp4) from Mus musculus (Mouse).